A 236-amino-acid chain; its full sequence is Translocon-associated protein subunit alpha (236 aa).

The first 20 residues, 1-20, serve as a signal peptide directing secretion; that stretch reads MNKLITLLLAVLMIISCVYS. Topologically, residues 21–163 are lumenal; sequence DDVEITDDEV…TEKETSFDMD (143 aa). N-linked (GlcNAc...) asparagine glycans are attached at residues Asn74, Asn94, Asn141, Asn148, and Asn152. The chain crosses the membrane as a helical span at residues 164 to 184; it reads SFFLILLGLGFVGGIGYIVYG. Over 185 to 236 the chain is Cytoplasmic; the sequence is KMPKQKKVRTVSKVNKNAVRVETEDETAEWLSGTSAASSKVKSVQKVVKKNK.

The protein belongs to the TRAP-alpha family. As to quaternary structure, heterotrimer of TRAP-alpha, TRAP-beta and TRAP-gamma. Phosphorylated in its cytoplasmic tail.

It is found in the endoplasmic reticulum membrane. Functionally, TRAP proteins are part of a complex whose function is to bind calcium to the ER membrane and thereby regulate the retention of ER resident proteins. The polypeptide is Translocon-associated protein subunit alpha (ssr1) (Dictyostelium discoideum (Social amoeba)).